The sequence spans 729 residues: Triadin (729 aa).

Residues 1-28 (MTEITAEGNASTTTTVIDSKNGSVPKSP) are disordered. Topologically, residues 1–47 (MTEITAEGNASTTTTVIDSKNGSVPKSPGKVLKRTVTEDIVTTFSSP) are cytoplasmic. Polar residues predominate over residues 8–24 (GNASTTTTVIDSKNGSV). Residues 48 to 68 (AAWLLVIALIITWSAVAIVMF) traverse the membrane as a helical segment. Residues 69–729 (DLVDYKNFSA…NSPGQKQQGQ (661 aa)) lie on the Lumenal side of the membrane. Asn75 is a glycosylation site (N-linked (GlcNAc...) asparagine). Positions 117–129 (EDEEDDDGDEDTD) are enriched in acidic residues. Disordered regions lie at residues 117–265 (EDEE…EQKD), 281–682 (DLKP…PTKQ), and 705–729 (PFTP…QQGQ). Composition is skewed to basic and acidic residues over residues 130–265 (KGEI…EQKD), 309–357 (LEEK…KASE), 371–433 (AKKD…KEEI), 444–509 (GKKE…EVKP), 516–531 (GKKE…KEAK), 538–562 (VQIH…EKVL), 580–598 (KKAE…DKPK), and 609–674 (ESGK…KEGT). An N-linked (GlcNAc...) asparagine glycan is attached at Asn647. Residues 715-729 (SSGQANSPGQKQQGQ) show a composition bias toward polar residues.

In terms of assembly, homooligomer of variable subunit number; disulfide-linked. Interacts with CASQ1 and RYR1 in skeletal muscle. Interacts with CASQ2. Post-translationally, phosphorylated by CaMK2. N-glycosylated.

The protein localises to the cell membrane. It localises to the sarcoplasmic reticulum membrane. Functionally, contributes to the regulation of lumenal Ca2+ release via the sarcoplasmic reticulum calcium release channels RYR1 and RYR2, a key step in triggering skeletal and heart muscle contraction. Required for normal organization of the triad junction, where T-tubules and the sarcoplasmic reticulum terminal cisternae are in close contact. Required for normal skeletal muscle strength. Plays a role in excitation-contraction coupling in the heart and in regulating the rate of heart beats. The polypeptide is Triadin (TRDN) (Homo sapiens (Human)).